The primary structure comprises 102 residues: NADH-quinone oxidoreductase subunit K (102 aa).

The next 3 helical transmembrane spans lie at 5–25, 31–51, and 65–85; these read LSHY…GIFL, IVIL…MVAF, and LFIL…LVVF.

It belongs to the complex I subunit 4L family. As to quaternary structure, NDH-1 is composed of 14 different subunits. Subunits NuoA, H, J, K, L, M, N constitute the membrane sector of the complex.

It is found in the cell inner membrane. It carries out the reaction a quinone + NADH + 5 H(+)(in) = a quinol + NAD(+) + 4 H(+)(out). NDH-1 shuttles electrons from NADH, via FMN and iron-sulfur (Fe-S) centers, to quinones in the respiratory chain. The immediate electron acceptor for the enzyme in this species is believed to be ubiquinone. Couples the redox reaction to proton translocation (for every two electrons transferred, four hydrogen ions are translocated across the cytoplasmic membrane), and thus conserves the redox energy in a proton gradient. This chain is NADH-quinone oxidoreductase subunit K, found in Agrobacterium fabrum (strain C58 / ATCC 33970) (Agrobacterium tumefaciens (strain C58)).